We begin with the raw amino-acid sequence, 329 residues long: Endochitinase A (329 aa).

An N-terminal signal peptide occupies residues 1-23; it reads MRLCKFTALSSLLFSLLLLSASA. Residues 24 to 65 form the Chitin-binding type-1 domain; the sequence is EQCGSQAGGARCPSGLCCSKFGWCGNTNDYCGPGNCQSQCPG. 4 cysteine pairs are disulfide-bonded: C26–C41, C35–C47, C40–C54, and C59–C63. P67 carries the post-translational modification 4-hydroxyproline; partial. 4 positions are modified to 4-hydroxyproline: P69, P71, P72, and P74. 4-hydroxyproline; partial is present on P75. Cystine bridges form between C101–C163, C175–C183, and C282–C314. The Proton donor role is filled by E145. Positions 323 to 329 are cleaved as a propeptide — removed in mature form; the sequence is GLLVDTM.

The protein belongs to the glycosyl hydrolase 19 family. Chitinase class I subfamily. Post-translationally, the 4-hydroxyproline residues are not glycosylated in this plant vacuolar protein.

It localises to the vacuole. It catalyses the reaction Random endo-hydrolysis of N-acetyl-beta-D-glucosaminide (1-&gt;4)-beta-linkages in chitin and chitodextrins.. In terms of biological role, defense against chitin-containing fungal pathogens. The polypeptide is Endochitinase A (CHN48) (Nicotiana tabacum (Common tobacco)).